The sequence spans 970 residues: Serine/threonine-protein kinase PLK4 (970 aa).

Residues 12–265 form the Protein kinase domain; that stretch reads FKVGNLLGKG…LSSVLDHPFM (254 aa). ATP is bound by residues 18–26 and lysine 41; that span reads LGKGSFAGV. Lysine 45 and lysine 46 each carry N6-acetyllysine. Aspartate 136 acts as the Proton acceptor in catalysis. 2 disordered regions span residues 323-458 and 497-538; these read TVFP…NHLC and SISP…HSVK. Positions 328–356 are enriched in polar residues; sequence NKSSTDFSSSGDGNSFYTQWGNQETSNSG. Residues 360-369 are compositionally biased toward basic and acidic residues; sequence VIQDAEERPH. Positions 379 to 393 are enriched in polar residues; it reads SDRSGTSNSQSQAKT. Serine 401 carries the post-translational modification Phosphoserine. Residues 438-454 show a composition bias toward polar residues; it reads SSSSGSFERPDNNQALS. Over residues 504-515 the composition is skewed to basic and acidic residues; it reads FQGHPDLQKDTS. One can recognise a Cryptic POLO box 1 (CPB1) domain in the interval 586–699; the sequence is TLRSITSPLV…SRFVQLVRSK (114 aa). Serine 665 is modified (phosphoserine). The Cryptic POLO box 2 (CPB2) domain occupies 700-813; the sequence is SPKITYFTRY…GRKPGSTSSP (114 aa). Residues 808–828 form a disordered region; sequence GSTSSPKALSPPPSVDSNYPT. Phosphoserine is present on serine 817. Residues 886–964 form the POLO box domain; the sequence is QLLKSVFVKN…LSSILLMFSN (79 aa).

It belongs to the protein kinase superfamily. Ser/Thr protein kinase family. CDC5/Polo subfamily. As to quaternary structure, homodimer. Interacts with CEP152 (via N-terminus). Interacts with CEP78; this interaction may be important for proper PLK4 localization to the centriole and PLK4-induced overduplication of centrioles. Interacts with CEP131. Interacts simultaneously with TENT5C and CEP192. Interacts with TENT5C; this interaction leads to the TENT5C recruitment in the centrosome. Interacts with CEP85; this interaction may be important in cell migration and centriole assembly. In terms of processing, acetylation by KAT2A and KAT2B impairs kinase activity by shifting the kinase to an inactive conformation. Ubiquitinated; leading to its degradation by the proteasome. Deubiquitinated by USP54; leading to PLK4 stabilization. Post-translationally, tyrosine-phosphorylated by TEC.

It localises to the cytoplasm. It is found in the cytoskeleton. Its subcellular location is the microtubule organizing center. The protein localises to the centrosome. The protein resides in the centriole. It localises to the nucleus. It is found in the nucleolus. Its subcellular location is the cleavage furrow. The enzyme catalyses L-seryl-[protein] + ATP = O-phospho-L-seryl-[protein] + ADP + H(+). The catalysed reaction is L-threonyl-[protein] + ATP = O-phospho-L-threonyl-[protein] + ADP + H(+). Serine/threonine-protein kinase that plays a central role in centriole duplication. Able to trigger procentriole formation on the surface of the parental centriole cylinder, leading to the recruitment of centriole biogenesis proteins such as SASS6, CPAP, CCP110, CEP135 and gamma-tubulin. When overexpressed, it is able to induce centrosome amplification through the simultaneous generation of multiple procentrioles adjoining each parental centriole during S phase. Phosphorylates 'Ser-151' of FBXW5 during the G1/S transition, leading to inhibit FBXW5 ability to ubiquitinate SASS6. Its central role in centriole replication suggests a possible role in tumorigenesis, centrosome aberrations being frequently observed in tumors. Also involved in deuterosome-mediated centriole amplification in multiciliated that can generate more than 100 centrioles. Also involved in trophoblast differentiation by phosphorylating HAND1, leading to disrupt the interaction between HAND1 and MDFIC and activate HAND1. Phosphorylates CDC25C and CHEK2. Required for the recruitment of STIL to the centriole and for STIL-mediated centriole amplification. Phosphorylates CEP131 at 'Ser-78' and PCM1 at 'Ser-372' which is essential for proper organization and integrity of centriolar satellites. In Homo sapiens (Human), this protein is Serine/threonine-protein kinase PLK4.